Here is a 340-residue protein sequence, read N- to C-terminus: Centromere protein N (340 aa).

2 positions are modified to phosphoserine: S227 and S236.

This sequence belongs to the CENP-N/CHL4 family. As to quaternary structure, component of the CENPA-NAC complex, at least composed of CENPA, CENPC, CENPH, CENPM, CENPN, CENPT and CENPU. The CENPA-NAC complex interacts with the CENPA-CAD complex, composed of CENPI, CENPK, CENPL, CENPO, CENPP, CENPQ, CENPR and CENPS. Interacts directly with CENPA. Identified in a centromere complex containing histones H2A, H2B and H4, and at least CENPA, CENPB, CENPC, CENPT, CENPN, HJURP, SUPT16H, SSRP1 and RSF1.

Its subcellular location is the nucleus. The protein localises to the chromosome. The protein resides in the centromere. It is found in the kinetochore. Functionally, component of the CENPA-NAC (nucleosome-associated) complex, a complex that plays a central role in assembly of kinetochore proteins, mitotic progression and chromosome segregation. The CENPA-NAC complex recruits the CENPA-CAD (nucleosome distal) complex and may be involved in incorporation of newly synthesized CENPA into centromeres. CENPN is the first protein to bind specifically to CENPA nucleosomes and the direct binding of CENPA nucleosomes by CENPN is required for centromere assembly. Required for chromosome congression and efficiently align the chromosomes on a metaphase plate. The protein is Centromere protein N (Cenpn) of Rattus norvegicus (Rat).